Here is a 108-residue protein sequence, read N- to C-terminus: Ig kappa chain V-VI region NQ2-6.1 (108 aa).

The segment at 1–23 (QILLTQSPAIMSASPGQKVTMTC) is framework-1. Residues C23 and C87 are joined by a disulfide bond. The segment at 24–33 (SASSSVSYMY) is complementarity-determining-1. Residues 34-48 (WYQQKPGSSPRLLIY) form a framework-2 region. The segment at 49–55 (DTSNLAS) is complementarity-determining-2. A framework-3 region spans residues 56 to 87 (GVPVRFSGSGSATSYSLTITRMQAEDAATYYC). A complementarity-determining-3 region spans residues 88–98 (QQWSSYPPMLT). Residues 99–108 (FGAGTKLELK) form a framework-4 region.

This Mus musculus (Mouse) protein is Ig kappa chain V-VI region NQ2-6.1.